The primary structure comprises 532 residues: Probable calcium-binding mitochondrial carrier CBG00135 (532 aa).

EF-hand domains lie at 70 to 105 (EKEKKIREMYDRLDADNDGSIDIRDLTQALSSQTPH), 107 to 136 (PATMAPKLLAKMKREDSDRVTYADFTNYVI), 137 to 172 (AHEARLAEVFDQIDSNRDGEVDVSEIKSYCKEMGVN), and 173 to 208 (LDDHKALSIVKKMDQSGSSSVNLNEFQDFMLLYPST). The Ca(2+) site is built by D83, D85, D87, S89, and D94. Ca(2+) is bound by residues D150, N152, D154, E156, and E161. 3 Solcar repeats span residues 243–329 (GVWW…IKRW), 339–425 (LTTY…LKSC), and 436–526 (PGVL…VRKQ). The next 6 membrane-spanning stretches (helical) occupy residues 249 to 266 (LVAGGVAGAMSRTCTAPF), 304 to 323 (GNGINVIKIAPESAMKFMSY), 349 to 362 (SSAGAISQTAIYPM), 400 to 419 (GYLPNLLGIIPYAGIDLTVY), 442 to 459 (LACGTCSSTCGQLASYPL), and 501 to 518 (GITPNFMKVIPAVSISYV).

Belongs to the mitochondrial carrier (TC 2.A.29) family.

It is found in the mitochondrion inner membrane. Calcium-dependent mitochondrial solute carrier. In Caenorhabditis briggsae, this protein is Probable calcium-binding mitochondrial carrier CBG00135.